The primary structure comprises 385 residues: HAT1-interacting factor 1 (385 aa).

Residues 80 to 199 form an important for interaction with heterotetrameric histone H3 and H4 and for interaction with dimeric histone H2A and H2B region; it reads GNLFGDALLA…RKSGFHIYFE (120 aa). Composition is skewed to low complexity over residues 85 to 97 and 105 to 116; these read DALL…SGSE and DVSNGEEGNENG. Residues 85–163 form a disordered region; sequence DALLAGDDGS…EEENVEKEEE (79 aa). Over residues 129-160 the composition is skewed to acidic residues; the sequence is DQEEEDLTGDVDSGDSEDSGEGSEEEEENVEK. A Phosphoserine modification is found at S174. TPR repeat units follow at residues 186–220, 229–262, and 289–322; these read VSQL…LGRP, ENSR…YLKA, and ALRW…RPKD. Residues 248-332 form an interaction with dimeric histone H2A and H2B region; it reads EAEMFSRAIH…SELQQARLAQ (85 aa). A disordered region spans residues 340–385; it reads VQENQQHGSKRPLSQPTTSIGFPALEKPLGDFNDLSQLVKKKPRRH. The span at 342-359 shows a compositional bias: polar residues; it reads ENQQHGSKRPLSQPTTSI.

It belongs to the NASP family. As to quaternary structure, homodimer. The homodimer interacts with a histone tetramer containing H3 and H4; the interaction is direct. The homodimer interacts with heterodimeric histone H2A and H2B; the interaction is direct. Component of the nuclear histone acetyltransferase B (HAT-B) complex composed of at least HAT1, HAT2 and HIF1. Does not interact with HAT1 in the absence of HAT2. Interacts with histones H3 and H4 in a HAT1/HAT2 dependent manner. Interaction with heterotetrameric histone H3 and H4 precludes interaction with dimeric histone H2A and H2B, irrespective of the fact that their binding involves non-identical regions of the protein.

It localises to the nucleus. Its function is as follows. Histone H3 and H4 specific chaperone component of the nuclear histone acetyltransferase B (HAT-B) complex. Involved in chromatin assembly and telomere silencing. This chain is HAT1-interacting factor 1 (HIF1), found in Saccharomyces cerevisiae (strain ATCC 204508 / S288c) (Baker's yeast).